The chain runs to 258 residues: uncharacterized protein (258 aa).

Residues Ile-17, Asp-53, Asn-80, Arg-113, Tyr-145, Lys-149, Ile-178, and Ser-180 each contribute to the NADP(+) site. The Proton donor role is filled by Tyr-145. Lys-149 functions as the Lowers pKa of active site Tyr in the catalytic mechanism.

The protein belongs to the short-chain dehydrogenases/reductases (SDR) family.

The protein resides in the cytoplasm. The protein localises to the nucleus. This is an uncharacterized protein from Schizosaccharomyces pombe (strain 972 / ATCC 24843) (Fission yeast).